Reading from the N-terminus, the 95-residue chain is Aspartyl/glutamyl-tRNA(Asn/Gln) amidotransferase subunit C (95 aa).

It belongs to the GatC family. In terms of assembly, heterotrimer of A, B and C subunits.

It catalyses the reaction L-glutamyl-tRNA(Gln) + L-glutamine + ATP + H2O = L-glutaminyl-tRNA(Gln) + L-glutamate + ADP + phosphate + H(+). The enzyme catalyses L-aspartyl-tRNA(Asn) + L-glutamine + ATP + H2O = L-asparaginyl-tRNA(Asn) + L-glutamate + ADP + phosphate + 2 H(+). Functionally, allows the formation of correctly charged Asn-tRNA(Asn) or Gln-tRNA(Gln) through the transamidation of misacylated Asp-tRNA(Asn) or Glu-tRNA(Gln) in organisms which lack either or both of asparaginyl-tRNA or glutaminyl-tRNA synthetases. The reaction takes place in the presence of glutamine and ATP through an activated phospho-Asp-tRNA(Asn) or phospho-Glu-tRNA(Gln). The polypeptide is Aspartyl/glutamyl-tRNA(Asn/Gln) amidotransferase subunit C (Roseobacter denitrificans (strain ATCC 33942 / OCh 114) (Erythrobacter sp. (strain OCh 114))).